The sequence spans 66 residues: Large ribosomal subunit protein uL29 (66 aa).

It belongs to the universal ribosomal protein uL29 family.

This chain is Large ribosomal subunit protein uL29, found in Rhizobium etli (strain ATCC 51251 / DSM 11541 / JCM 21823 / NBRC 15573 / CFN 42).